Consider the following 235-residue polypeptide: uncharacterized protein (235 aa).

This is an uncharacterized protein from Mycoplasma pneumoniae (strain ATCC 29342 / M129 / Subtype 1) (Mycoplasmoides pneumoniae).